Reading from the N-terminus, the 488-residue chain is DNA polymerase processivity factor (488 aa).

Disordered regions lie at residues 1–26 (MTDS…GQPE), 331–453 (SPSA…RSGS), and 469–488 (PGAF…FGFP). A compositionally biased stretch (low complexity) spans 331–344 (SPSAGSSASRASGS). The segment covering 345–355 (EPTDSQDSASD) has biased composition (polar residues). Residues 368-379 (AARAGEAGALHA) show a composition bias toward low complexity. Residues 383-393 (PSSTTRVTPTT) are compositionally biased toward polar residues. The Bipartite nuclear localization signal motif lies at 394–413 (KRGRSGGEDARADTALKKPK). Basic and acidic residues predominate over residues 398–409 (SGGEDARADTAL). Residues 437-453 (ADGTAARPAAPDARSGS) show a composition bias toward low complexity.

Belongs to the herpesviridae DNA polymerase processivity factor family. In terms of assembly, interacts with the DNA polymerase catalytic subunit UL30. Interacts with the origin-binding protein.

The protein resides in the host nucleus. In terms of biological role, plays an essential role in viral DNA replication by acting as the polymerase accessory subunit. Associates with the viral polymerase to increase its processivity and forms high-affinity direct interactions with DNA. Facilitates the origin-binding protein UL9 loading onto DNA thus increasing its ability to assemble into a functional complex capable of unwinding duplex DNA. The polypeptide is DNA polymerase processivity factor (Homo sapiens (Human)).